Reading from the N-terminus, the 91-residue chain is Putative transmembrane protein ORF91a (91 aa).

The next 3 membrane-spanning stretches (helical) occupy residues 17–37 (TGISFDSITGAIIAGVVVGLA), 40–60 (AFLGKFPDYVEVLIGVGLLFM), and 69–89 (GIGFVLTADGIYGLIKNYIST).

It localises to the host membrane. This is Putative transmembrane protein ORF91a from Acidianus convivator (ABV).